Reading from the N-terminus, the 789-residue chain is Probable Xaa-Pro aminopeptidase SNOG_02267 (789 aa).

Asp-240, Asp-251, Glu-375, and Glu-416 together coordinate Mn(2+). 2 disordered regions span residues Ser-607–Ala-658 and Asn-670–Leu-704. Residues Val-622 to Thr-637 are compositionally biased toward polar residues. The segment covering Ala-638–Gln-650 has biased composition (basic and acidic residues).

It belongs to the peptidase M24B family. Mn(2+) is required as a cofactor.

It carries out the reaction Release of any N-terminal amino acid, including proline, that is linked to proline, even from a dipeptide or tripeptide.. In terms of biological role, catalyzes the removal of a penultimate prolyl residue from the N-termini of peptides. The sequence is that of Probable Xaa-Pro aminopeptidase SNOG_02267 from Phaeosphaeria nodorum (strain SN15 / ATCC MYA-4574 / FGSC 10173) (Glume blotch fungus).